The primary structure comprises 157 residues: SsrA-binding protein (157 aa).

This sequence belongs to the SmpB family.

It is found in the cytoplasm. Required for rescue of stalled ribosomes mediated by trans-translation. Binds to transfer-messenger RNA (tmRNA), required for stable association of tmRNA with ribosomes. tmRNA and SmpB together mimic tRNA shape, replacing the anticodon stem-loop with SmpB. tmRNA is encoded by the ssrA gene; the 2 termini fold to resemble tRNA(Ala) and it encodes a 'tag peptide', a short internal open reading frame. During trans-translation Ala-aminoacylated tmRNA acts like a tRNA, entering the A-site of stalled ribosomes, displacing the stalled mRNA. The ribosome then switches to translate the ORF on the tmRNA; the nascent peptide is terminated with the 'tag peptide' encoded by the tmRNA and targeted for degradation. The ribosome is freed to recommence translation, which seems to be the essential function of trans-translation. The sequence is that of SsrA-binding protein from Christiangramia forsetii (strain DSM 17595 / CGMCC 1.15422 / KT0803) (Gramella forsetii).